The primary structure comprises 192 residues: Sarcoplasmic calcium-binding protein, beta chain (192 aa).

An N-acetylalanine modification is found at A1. EF-hand domains follow at residues 4–39 (WDNR…VTLI), 56–91 (IMAN…NCKG), 100–135 (AFKV…RSAF), and 136–171 (ADVK…YAQF). The Ca(2+) site is built by D17, D19, D21, D28, D69, N71, D73, E75, E80, D113, D115, D117, M119, and E124.

SCPs from crayfish, lobster, and shrimp are polymorphic dimers; three isotypes (alpha-alpha, alpha-beta, and beta-beta) have been identified.

In terms of biological role, like parvalbumins, SCPs seem to be more abundant in fast contracting muscles, but no functional relationship can be established from this distribution. The protein is Sarcoplasmic calcium-binding protein, beta chain of Penaeus sp. (Penoeid shrimp).